A 538-amino-acid polypeptide reads, in one-letter code: Eukaryotic translation initiation factor 3 subunit L (538 aa).

One can recognise a PCI domain in the interval 305–513 (TFSDILLYIQ…IHIADTKVSH (209 aa)).

Belongs to the eIF-3 subunit L family. In terms of assembly, component of the eukaryotic translation initiation factor 3 (eIF-3) complex. The eIF-3 complex interacts with pix.

It localises to the cytoplasm. In terms of biological role, component of the eukaryotic translation initiation factor 3 (eIF-3) complex, which is involved in protein synthesis of a specialized repertoire of mRNAs and, together with other initiation factors, stimulates binding of mRNA and methionyl-tRNAi to the 40S ribosome. The eIF-3 complex specifically targets and initiates translation of a subset of mRNAs involved in cell proliferation. This Drosophila virilis (Fruit fly) protein is Eukaryotic translation initiation factor 3 subunit L.